The primary structure comprises 235 residues: Small ribosomal subunit protein uS3 (235 aa).

A KH type-2 domain is found at 39-107 (VRKFLNKELA…PAQINIAEVK (69 aa)).

It belongs to the universal ribosomal protein uS3 family. In terms of assembly, part of the 30S ribosomal subunit. Forms a tight complex with proteins S10 and S14.

In terms of biological role, binds the lower part of the 30S subunit head. Binds mRNA in the 70S ribosome, positioning it for translation. The chain is Small ribosomal subunit protein uS3 from Actinobacillus pleuropneumoniae serotype 5b (strain L20).